Here is a 186-residue protein sequence, read N- to C-terminus: Elongation factor P (186 aa).

It belongs to the elongation factor P family.

It localises to the cytoplasm. The protein operates within protein biosynthesis; polypeptide chain elongation. In terms of biological role, involved in peptide bond synthesis. Stimulates efficient translation and peptide-bond synthesis on native or reconstituted 70S ribosomes in vitro. Probably functions indirectly by altering the affinity of the ribosome for aminoacyl-tRNA, thus increasing their reactivity as acceptors for peptidyl transferase. The sequence is that of Elongation factor P from Shewanella loihica (strain ATCC BAA-1088 / PV-4).